A 126-amino-acid polypeptide reads, in one-letter code: Large ribosomal subunit protein bL12 (126 aa).

It belongs to the bacterial ribosomal protein bL12 family. In terms of assembly, homodimer. Part of the ribosomal stalk of the 50S ribosomal subunit. Forms a multimeric L10(L12)X complex, where L10 forms an elongated spine to which 2 to 4 L12 dimers bind in a sequential fashion. Binds GTP-bound translation factors.

Forms part of the ribosomal stalk which helps the ribosome interact with GTP-bound translation factors. Is thus essential for accurate translation. The polypeptide is Large ribosomal subunit protein bL12 (Trichlorobacter lovleyi (strain ATCC BAA-1151 / DSM 17278 / SZ) (Geobacter lovleyi)).